The sequence spans 379 residues: Alkanesulfonate monooxygenase (379 aa).

Belongs to the SsuD family.

It catalyses the reaction an alkanesulfonate + FMNH2 + O2 = an aldehyde + FMN + sulfite + H2O + 2 H(+). Functionally, catalyzes the desulfonation of aliphatic sulfonates. The polypeptide is Alkanesulfonate monooxygenase (Pseudomonas syringae pv. tomato (strain ATCC BAA-871 / DC3000)).